A 514-amino-acid polypeptide reads, in one-letter code: Ribonuclease Y (514 aa).

The helical transmembrane segment at 3-23 (YMIIYEIIAGILIVVAILIHF) threads the bilayer. A KH domain is found at 204 to 289 (TVHVVTLPND…EMVEKAEKEL (86 aa)). The HD domain occupies 330–423 (VLKHSVEVAY…VQAADAISAA (94 aa)).

It belongs to the RNase Y family.

It localises to the cell membrane. Its function is as follows. Endoribonuclease that initiates mRNA decay. The protein is Ribonuclease Y of Clostridium kluyveri (strain ATCC 8527 / DSM 555 / NBRC 12016 / NCIMB 10680 / K1).